The sequence spans 92 residues: uncharacterized protein (92 aa).

2 helical membrane passes run Gly-34–Gly-54 and Leu-65–Val-85.

It is found in the cell membrane. This is an uncharacterized protein from Bacillus anthracis.